The primary structure comprises 207 residues: Ribosomal RNA small subunit methyltransferase G (207 aa).

Residues Gly-75, Phe-80, 126-127 (LE), and Arg-140 each bind S-adenosyl-L-methionine.

It belongs to the methyltransferase superfamily. RNA methyltransferase RsmG family.

The protein resides in the cytoplasm. The enzyme catalyses guanosine(527) in 16S rRNA + S-adenosyl-L-methionine = N(7)-methylguanosine(527) in 16S rRNA + S-adenosyl-L-homocysteine. In terms of biological role, specifically methylates the N7 position of guanine in position 527 of 16S rRNA. This chain is Ribosomal RNA small subunit methyltransferase G, found in Erythrobacter litoralis (strain HTCC2594).